Consider the following 778-residue polypeptide: Endonuclease MutS2 (778 aa).

328 to 335 (GPNTGGKT) serves as a coordination point for ATP. In terms of domain architecture, Smr spans 702–777 (LDLRGKRYEE…GSGATIVTFK (76 aa)).

Belongs to the DNA mismatch repair MutS family. MutS2 subfamily. In terms of assembly, homodimer. Binds to stalled ribosomes, contacting rRNA.

Functionally, endonuclease that is involved in the suppression of homologous recombination and thus may have a key role in the control of bacterial genetic diversity. Acts as a ribosome collision sensor, splitting the ribosome into its 2 subunits. Detects stalled/collided 70S ribosomes which it binds and splits by an ATP-hydrolysis driven conformational change. Acts upstream of the ribosome quality control system (RQC), a ribosome-associated complex that mediates the extraction of incompletely synthesized nascent chains from stalled ribosomes and their subsequent degradation. Probably generates substrates for RQC. The polypeptide is Endonuclease MutS2 (Streptococcus pneumoniae (strain ATCC 700669 / Spain 23F-1)).